Consider the following 319-residue polypeptide: N-acetylneuraminate lyase (319 aa).

The aceneuramate site is built by Thr51 and Thr52. Catalysis depends on Tyr143, which acts as the Proton donor. The Schiff-base intermediate with substrate role is filled by Lys173. 5 residues coordinate aceneuramate: Ser175, Gly199, Asp201, Glu202, and Ser218.

Belongs to the DapA family. NanA subfamily. As to quaternary structure, homotetramer.

It is found in the cytoplasm. It catalyses the reaction aceneuramate = aldehydo-N-acetyl-D-mannosamine + pyruvate. The protein operates within amino-sugar metabolism; N-acetylneuraminate degradation. In terms of biological role, catalyzes the cleavage of N-acetylneuraminic acid (sialic acid) to form pyruvate and N-acetylmannosamine via a Schiff base intermediate. It prevents sialic acids from being recycled and returning to the cell surface. Involved in the N-glycolylneuraminic acid (Neu5Gc) degradation pathway. The polypeptide is N-acetylneuraminate lyase (Sus scrofa (Pig)).